The primary structure comprises 203 residues: Superoxide dismutase [Mn] (203 aa).

The Mn(2+) site is built by His-27, His-81, Asp-164, and His-168.

The protein belongs to the iron/manganese superoxide dismutase family. Homodimer. Mn(2+) is required as a cofactor.

The catalysed reaction is 2 superoxide + 2 H(+) = H2O2 + O2. Its function is as follows. Destroys superoxide anion radicals which are normally produced within the cells and which are toxic to biological systems. Partially complements double sodA-sodB deletions in E.coli. In Pseudomonas aeruginosa (strain ATCC 15692 / DSM 22644 / CIP 104116 / JCM 14847 / LMG 12228 / 1C / PRS 101 / PAO1), this protein is Superoxide dismutase [Mn].